Here is a 198-residue protein sequence, read N- to C-terminus: MTASTTINKGDSPNGDSSASSVLHQKVLGSRRFSNYWWASIVTLGASGFFLAGISSYLRVNLLIVTDPTQLIFVPQGLVMGLYGTAGLLLASYLWLVILWDLGGGYNDFNRETGNIKIFRWGFPGKNRKIEIGSRIQDIQSVRVDIKEGLNPRRALYLRVKGRRDIPLTRVGQPLSLAELETQGAQLARFLGVPLEGL.

The tract at residues 1–20 is disordered; the sequence is MTASTTINKGDSPNGDSSAS. 2 helical membrane passes run 36-58 and 78-100; these read YWWASIVTLGASGFFLAGISSYL and LVMGLYGTAGLLLASYLWLVILW.

It belongs to the Ycf4 family.

It localises to the cellular thylakoid membrane. Seems to be required for the assembly of the photosystem I complex. The polypeptide is Photosystem I assembly protein Ycf4 (Nostoc sp. (strain PCC 7120 / SAG 25.82 / UTEX 2576)).